The following is a 172-amino-acid chain: B-box zinc finger protein 18 (172 aa).

Residues cysteine 5, cysteine 8, cysteine 28, histidine 33, cysteine 56, cysteine 59, cysteine 79, and histidine 84 each contribute to the Zn(2+) site. The B box-type 1; atypical zinc-finger motif lies at 5 to 47; that stretch reads CDACESAAAIVFCAADEAALCCSCDEKVHKCNKLASRHLRVGL. The B box-type 2; atypical zinc-finger motif lies at 56-96; that stretch reads CDICENAPAFFYCEIDGSSLCLQCDMVVHVGGKRTHRRFLL. The disordered stretch occupies residues 119 to 172; sequence QKASSGRGQESNGNGDHDHNMIDLNSNPQRVHEPGSHNQEEGIDVNNANNHEHE. Over residues 120 to 132 the composition is skewed to polar residues; sequence KASSGRGQESNGN. The span at 148–158 shows a compositional bias: basic and acidic residues; sequence RVHEPGSHNQE.

Expressed in vasculature of leaves and petioles.

The protein localises to the nucleus. Functionally, acts as a negative regulator of seedling photomorphogenesis. Acts as a negative regulator of blue light-mediated inhibition of hypocotyl elongation through increase of bioactive gibberellin levels. Acts as a repressor of thermotolerance by modulating expression of a set of heat shock-responsive genes. The protein is B-box zinc finger protein 18 of Arabidopsis thaliana (Mouse-ear cress).